Consider the following 278-residue polypeptide: Large ribosomal subunit protein uL2 (278 aa).

A disordered region spans residues 222–264 (RGVAMNPVDHPHGGGEGRTSGGRNPVTPWGVPTKGKKTRSNKR).

Belongs to the universal ribosomal protein uL2 family. In terms of assembly, part of the 50S ribosomal subunit. Forms a bridge to the 30S subunit in the 70S ribosome.

In terms of biological role, one of the primary rRNA binding proteins. Required for association of the 30S and 50S subunits to form the 70S ribosome, for tRNA binding and peptide bond formation. It has been suggested to have peptidyltransferase activity; this is somewhat controversial. Makes several contacts with the 16S rRNA in the 70S ribosome. The protein is Large ribosomal subunit protein uL2 of Methylobacterium radiotolerans (strain ATCC 27329 / DSM 1819 / JCM 2831 / NBRC 15690 / NCIMB 10815 / 0-1).